The following is a 253-amino-acid chain: MNLTDKTVLITGGASGIGYAAVQAFLGQQANVVVADIDEAQGEAMVRKENNDRLHFVQTDITDEAACQHAVESAVHTFGGLDVLINNAGIEIVAPIHEMELSDWNKVLQVNLTGMFLMSKHALKHMLAAGKGNIINTCSVGGLVAWPDIPAYNASKGGVLQLTKSMAVDYAKHQIRVNCVCPGIIDTPLNEKSFLENNEGTLEEIKKEKAKVNPLLRLGKPEEIANVMLFLASDLSSYMTGSAITADGGYTAQ.

Residue 9 to 31 coordinates NAD(+); that stretch reads LITGGASGIGYAAVQAFLGQQAN. Ser139 contributes to the substrate binding site. Tyr152 (proton acceptor) is an active-site residue.

The protein belongs to the short-chain dehydrogenases/reductases (SDR) family.

It catalyses the reaction L-dihydroanticapsin + NAD(+) = L-anticapsin + NADH + H(+). Its pathway is antibiotic biosynthesis; bacilysin biosynthesis. Its function is as follows. Part of the bacABCDEFG operon responsible for the biosynthesis of bacilysin, an irreversible inactivator of the glutaminase domain of glucosamine synthetase. Catalyzes the dehydrogenation of the C7-hydroxyl group in the 4S-tetrahydrotyrosine (4S-H4Tyr) to yield anticapsin (epoxycyclohexanonyl-Ala). It is not able to oxidize the 4R-H4Tyr diastereomer and the dihydrobacilysin dipeptide (L-Ala-4S-H4Tyr dipeptide). The protein is Dihydroanticapsin 7-dehydrogenase of Bacillus subtilis (strain 168).